The chain runs to 255 residues: BPI fold-containing family A member 1 (255 aa).

The first 19 residues, 1-19 (MFHIGSLVVLCGLLAPTTA), serve as a signal peptide directing secretion. Positions 87–92 (LLGSLL) are important for surfactant activity and antibacterial properties. 3 N-linked (GlcNAc...) asparagine glycosylation sites follow: N157, N178, and N205. An intrachain disulfide couples C179 to C223.

This sequence belongs to the BPI/LBP/Plunc superfamily. Plunc family. In terms of assembly, monomer. Interacts (via N-terminus) with SCNN1B, a subunit of the heterotrimeric epithelial sodium channel (ENaC); this inhibits proteolytic activation of ENaC. In terms of tissue distribution, expressed in trachea, and at lower levels in nasal epithelium.

The protein localises to the secreted. Lipid-binding protein which shows high specificity for the surfactant phospholipid dipalmitoylphosphatidylcholine (DPPC). Plays a role in the innate immune responses of the upper airways. Reduces the surface tension in secretions from airway epithelia and inhibits the formation of biofilm by pathogenic Gram-negative bacteria, such as P.aeruginosa and K.pneumoniae. Negatively regulates proteolytic cleavage of SCNN1G, an event that is required for activation of the epithelial sodium channel (ENaC), and thereby contributes to airway surface liquid homeostasis and proper clearance of mucus. Plays a role in the airway inflammatory response after exposure to irritants. May attract macrophages and neutrophils. The sequence is that of BPI fold-containing family A member 1 (BPIFA1) from Bos taurus (Bovine).